Here is a 68-residue protein sequence, read N- to C-terminus: DNA-directed RNA polymerase subunit omega (68 aa).

This sequence belongs to the RNA polymerase subunit omega family. In terms of assembly, the RNAP catalytic core consists of 2 alpha, 1 beta, 1 beta' and 1 omega subunit. When a sigma factor is associated with the core the holoenzyme is formed, which can initiate transcription.

It carries out the reaction RNA(n) + a ribonucleoside 5'-triphosphate = RNA(n+1) + diphosphate. Promotes RNA polymerase assembly. Latches the N- and C-terminal regions of the beta' subunit thereby facilitating its interaction with the beta and alpha subunits. The polypeptide is DNA-directed RNA polymerase subunit omega (Neisseria gonorrhoeae (strain NCCP11945)).